The chain runs to 137 residues: MEKTLSIIKPDAVKKGVIGKILDRFESNGLRIAAMKKVQLSKEQAENFYAVHKERPFFKDLVEFMISGPVVVSVLEGEGAVLKNRDLMGATNPKEAKAGTIRADFAESIDANAVHGSDSLENAKIEIEFFFKPNEIY.

6 residues coordinate ATP: Lys-9, Phe-57, Arg-85, Thr-91, Arg-102, and Asn-112. The active-site Pros-phosphohistidine intermediate is the His-115.

It belongs to the NDK family. Homotetramer. Mg(2+) serves as cofactor.

The protein resides in the cytoplasm. It carries out the reaction a 2'-deoxyribonucleoside 5'-diphosphate + ATP = a 2'-deoxyribonucleoside 5'-triphosphate + ADP. The enzyme catalyses a ribonucleoside 5'-diphosphate + ATP = a ribonucleoside 5'-triphosphate + ADP. Functionally, major role in the synthesis of nucleoside triphosphates other than ATP. The ATP gamma phosphate is transferred to the NDP beta phosphate via a ping-pong mechanism, using a phosphorylated active-site intermediate. This Campylobacter jejuni subsp. doylei (strain ATCC BAA-1458 / RM4099 / 269.97) protein is Nucleoside diphosphate kinase.